The primary structure comprises 529 residues: ATP synthase F(1) complex catalytic subunit beta, mitochondrial (529 aa).

A mitochondrion-targeting transit peptide spans 1–46; that stretch reads MLSLVGRVASASASGALRGLNPLAALPQAHLLLRTAPAGVHPARDY. A glycan (O-linked (GlcNAc) serine) is linked at Ser-106. N6-acetyllysine; alternate occurs at positions 124, 133, and 161. N6-succinyllysine; alternate occurs at positions 124, 133, and 161. Lys-198 carries the post-translational modification N6-acetyllysine. ADP-binding residues include Gly-209, Val-210, Gly-211, Lys-212, Thr-213, and Val-214. Residue Gly-209 coordinates ATP. Gly-209, Val-210, Gly-211, Lys-212, and Thr-213 together coordinate phosphate. The ATP site is built by Gly-211, Lys-212, Thr-213, and Val-214. Thr-213 serves as a coordination point for Mg(2+). Position 238 (Glu-238) interacts with Mg(2+). Arg-239 lines the ATP pocket. 2 positions are modified to N6-acetyllysine; alternate: Lys-259 and Lys-264. Residues Lys-259 and Lys-264 each carry the N6-succinyllysine; alternate modification. Thr-312 bears the Phosphothreonine mark. Ser-415 is subject to Phosphoserine. At Lys-426 the chain carries N6-acetyllysine. Ser-433 carries the post-translational modification Phosphoserine. N6-acetyllysine is present on residues Lys-480 and Lys-485. Lys-522 is modified (N6-acetyllysine; alternate). N6-succinyllysine; alternate is present on Lys-522. Ser-529 is subject to Phosphoserine.

Belongs to the ATPase alpha/beta chains family. Homotrimer. Component of the ATP synthase complex composed at least of ATP5F1A/subunit alpha, ATP5F1B/subunit beta, ATP5MC1/subunit c (homooctomer), MT-ATP6/subunit a, MT-ATP8/subunit 8, ATP5ME/subunit e, ATP5MF/subunit f, ATP5MG/subunit g, ATP5MK/subunit k, ATP5MJ/subunit j, ATP5F1C/subunit gamma, ATP5F1D/subunit delta, ATP5F1E/subunit epsilon, ATP5PF/subunit F6, ATP5PB/subunit b, ATP5PD/subunit d, ATP5PO/subunit OSCP. ATP synthase complex consists of a soluble F(1) head domain (subunits alpha(3) and beta(3)) - the catalytic core - and a membrane F(0) domain - the membrane proton channel (subunits c, a, 8, e, f, g, k and j). These two domains are linked by a central stalk (subunits gamma, delta, and epsilon) rotating inside the F1 region and a stationary peripheral stalk (subunits F6, b, d, and OSCP). Interacts with PPIF. Interacts with BCL2L1 isoform BCL-X(L); the interaction mediates the association of BCL2L1 isoform BCL-X(L) with the mitochondrial membrane F(1)F(0) ATP synthase and enhances neurons metabolic efficiency. Interacts with CLN5 and PPT1. Interacts with S100A1; this interaction increases F1-ATPase activity. Interacts with MTLN. Interacts with TTC5/STRAP; the interaction results in decreased mitochondrial ATP production.

The protein localises to the mitochondrion inner membrane. It carries out the reaction ATP + H2O + 4 H(+)(in) = ADP + phosphate + 5 H(+)(out). Functionally, catalytic subunit beta, of the soluble F(1) head domain within the mitochondrial ATP synthase complex (F(1)F(0) ATP synthase or complex V) that produces ATP from ADP and phosphate inorganique in the presence of a proton gradient across the membrane which is generated by electron transport complexes of the respiratory chain. With the non-catalytic subunit alpha (ATP5F1A), forms the catalytic core in the F(1) domain. ATP synthase complex consist of two structural domains, F(1) - containing the extramembraneous catalytic core, and F(0) - containing the membrane proton channel, linked together by a central stalk and a peripheral stalk. During catalysis, ATP synthesis in the catalytic domain of F(1) is coupled via a rotary mechanism of the central stalk subunits to proton translocation. Its function is as follows. Catalytic subunit beta, of the mitochondrial membrane ATP synthase complex (F(1)F(0) ATP synthase or Complex V) that produces ATP from ADP in the presence of a proton gradient across the membrane which is generated by electron transport complexes of the respiratory chain. ATP synthase complex consist of a soluble F(1) head domain - the catalytic core - and a membrane F(1) domain - the membrane proton channel. These two domains are linked by a central stalk rotating inside the F(1) region and a stationary peripheral stalk. During catalysis, ATP synthesis in the catalytic domain of F(1) is coupled via a rotary mechanism of the central stalk subunits to proton translocation. In vivo, can only synthesize ATP although its ATP hydrolase activity can be activated artificially in vitro. With the subunit alpha (ATP5F1A), forms the catalytic core in the F(1) domain. The chain is ATP synthase F(1) complex catalytic subunit beta, mitochondrial from Rattus norvegicus (Rat).